Consider the following 362-residue polypeptide: 3-isopropylmalate dehydrogenase (362 aa).

78–91 (GPKWESLPPDEQPE) serves as a coordination point for NAD(+). The substrate site is built by arginine 99, arginine 109, arginine 138, and aspartate 227. Residues aspartate 227, aspartate 251, and aspartate 255 each coordinate Mg(2+). 285-297 (GSAPDIAGQGIAN) provides a ligand contact to NAD(+).

This sequence belongs to the isocitrate and isopropylmalate dehydrogenases family. LeuB type 1 subfamily. Homodimer. Mg(2+) serves as cofactor. The cofactor is Mn(2+).

Its subcellular location is the cytoplasm. The catalysed reaction is (2R,3S)-3-isopropylmalate + NAD(+) = 4-methyl-2-oxopentanoate + CO2 + NADH. It functions in the pathway amino-acid biosynthesis; L-leucine biosynthesis; L-leucine from 3-methyl-2-oxobutanoate: step 3/4. Catalyzes the oxidation of 3-carboxy-2-hydroxy-4-methylpentanoate (3-isopropylmalate) to 3-carboxy-4-methyl-2-oxopentanoate. The product decarboxylates to 4-methyl-2 oxopentanoate. The protein is 3-isopropylmalate dehydrogenase of Geobacter sulfurreducens (strain ATCC 51573 / DSM 12127 / PCA).